The following is a 775-amino-acid chain: N6-adenosine-methyltransferase non-catalytic subunit MTB (775 aa).

Basic and acidic residues predominate over residues 1 to 10 (MKKKQEESSL). Disordered regions lie at residues 1–424 (MKKK…GAIP) and 520–569 (DRGG…EQND). Low complexity predominate over residues 40-49 (FESSSRSGGS). Composition is skewed to basic and acidic residues over residues 50-79 (KSKE…ERTH), 100-117 (DGDH…DSGG), 125-222 (EHGE…LKDN), 229-278 (SSGD…RGEA), and 333-344 (EWAHNQEGRQRS). Residues 375–400 (QRGSTPGRTNFVQTPNRGYQTPQGTR) are compositionally biased toward polar residues.

The protein belongs to the MT-A70-like family. As to quaternary structure, forms homodimers. Interacts with HAKAI, MTA and VIR. Associates with MTA, FIP37, VIR and HAKAI to form the m6A writer complex which is essential for adenosine methylation at specific mRNA sequences.

It localises to the nucleus speckle. Its subcellular location is the nucleus. The protein localises to the nucleoplasm. Its function is as follows. Probable non-catalytic subunit of the N6-methyltransferase complex, a multiprotein complex that mediates N6-methyladenosine (m6A) methylation at the 5'-[AG]GAC-3' consensus sites of some mRNAs. Associates with MTA, FIP37, VIR and HAKAI to form the m6A writer complex which is essential for adenosine methylation at specific mRNA sequences. N6-methyladenosine (m6A) plays a role in mRNA stability, processing, translation efficiency and editing. The sequence is that of N6-adenosine-methyltransferase non-catalytic subunit MTB from Arabidopsis thaliana (Mouse-ear cress).